Consider the following 515-residue polypeptide: 1-pyrroline-5-carboxylate dehydrogenase (515 aa).

Active-site residues include E286 and C320.

This sequence belongs to the aldehyde dehydrogenase family. RocA subfamily.

It catalyses the reaction L-glutamate 5-semialdehyde + NAD(+) + H2O = L-glutamate + NADH + 2 H(+). It functions in the pathway amino-acid degradation; L-proline degradation into L-glutamate; L-glutamate from L-proline: step 2/2. The polypeptide is 1-pyrroline-5-carboxylate dehydrogenase (Bacillus cytotoxicus (strain DSM 22905 / CIP 110041 / 391-98 / NVH 391-98)).